Consider the following 1136-residue polypeptide: 3-O-alpha-D-galactosyl-alpha-L-arabinofuranosidase (1136 aa).

The N-terminal stretch at methionine 1–alanine 36 is a signal peptide. Residue glutamate 194 is the Proton donor of the active site. Catalysis depends on glutamate 321, which acts as the Nucleophile. CBM6 domains follow at residues glutamine 521 to tyrosine 656 and valine 669 to alanine 779. The 59-residue stretch at lysine 987 to valine 1045 folds into the BIG2 domain. Residues serine 1049–histidine 1104 are disordered. Polar residues predominate over residues glycine 1087 to lysine 1103. The chain crosses the membrane as a helical span at residues glycine 1109–leucine 1129.

This sequence belongs to the glycosyl hydrolase 39 family.

The protein localises to the cell membrane. Its subcellular location is the secreted. It localises to the cell wall. The enzyme catalyses Hydrolysis of alpha-D-Galp-(1-&gt;3)-L-Araf disaccharides from non-reducing terminals in branches of type II arabinogalactan attached to proteins.. In terms of biological role, hydrolase involved in the degradation of the gum arabic arabinogalactan protein (AGP). Catalyzes the release of 3-O-alpha-D-galactopyranosyl-L-arabinose (alpha-D-Galp-(1-&gt;3)-L-Ara) from gum arabic AGP. Can also release 3-O-beta-L-arabinopyranosyl-L-arabinose (beta-L-Arap-(1-&gt;3)-L-Ara) from gum arabic AGP and larch AGP, but the alpha-D-Galp-(1-&gt;3)-L-Ara release activity is 594-fold higher than the beta-L-Arap-(1-&gt;3)-L-Ara release activity. Exhibits no reactivity toward p-nitrophenyl (pNP)-alpha-Araf or any other tested pNP substrate. Plays a crucial role in gum arabic AGP assimilation in B.longum. This Bifidobacterium longum subsp. longum protein is 3-O-alpha-D-galactosyl-alpha-L-arabinofuranosidase.